Here is a 111-residue protein sequence, read N- to C-terminus: MTGLMKAFQKLSPTKRQYAEITQSNSSISSSSSGSKYNDSSSGRYTPLSEEGRTSARASTSTQAQKPASSQQKGGTSSREDEQKLLRKLQTTFGEASNLLNEYVDMRSRKK.

Residues Met-1–Leu-85 are disordered. Polar residues predominate over residues Leu-11–Gln-23. The span at Ser-24 to Ser-42 shows a compositional bias: low complexity. Positions Ala-56–Ser-77 are enriched in polar residues.

This is an uncharacterized protein from Microplitis demolitor (Parasitoid wasp).